Reading from the N-terminus, the 267-residue chain is Indole-3-glycerol phosphate synthase (267 aa).

The protein belongs to the TrpC family.

The enzyme catalyses 1-(2-carboxyphenylamino)-1-deoxy-D-ribulose 5-phosphate + H(+) = (1S,2R)-1-C-(indol-3-yl)glycerol 3-phosphate + CO2 + H2O. It participates in amino-acid biosynthesis; L-tryptophan biosynthesis; L-tryptophan from chorismate: step 4/5. This Cupriavidus taiwanensis (strain DSM 17343 / BCRC 17206 / CCUG 44338 / CIP 107171 / LMG 19424 / R1) (Ralstonia taiwanensis (strain LMG 19424)) protein is Indole-3-glycerol phosphate synthase.